A 327-amino-acid polypeptide reads, in one-letter code: BarH-like 1 homeobox protein (327 aa).

Disordered regions lie at residues 1–90, 113–181, and 303–327; these read MEGS…AQSR, PYSS…PRKA, and LQGASEPPPPLPPLPGVLPRAAQPR. Residues 33–54 show a composition bias toward low complexity; sequence RSPLELSPRSESSSDCSSPASP. The segment covering 79–90 has biased composition (polar residues); it reads QPGQLSAPAQSR. Composition is skewed to basic and acidic residues over residues 133–143 and 152–166; these read AGEDFRDKLDK and SEYKVKEEGDREISS. A DNA-binding region (homeobox) is located at residues 178–237; sequence PRKARTAFTDHQLAQLERSFERQKYLSVQDRMELAASLNLTDTQVKTWYQNRRTKWKRQT. Positions 308–318 are enriched in pro residues; sequence EPPPPLPPLPG.

It belongs to the BAR homeobox family.

The protein resides in the nucleus. The sequence is that of BarH-like 1 homeobox protein (Barhl1) from Mus musculus (Mouse).